The primary structure comprises 94 residues: Cell division protein FtsB (94 aa).

The Cytoplasmic segment spans residues 1 to 3 (MRA). A helical transmembrane segment spans residues 4 to 21 (FAVLLIIALGWLQYTLWF). Over 22-94 (GKNGMEDYAQ…YRIIDENSEE (73 aa)) the chain is Periplasmic. Residues 40–60 (EEVNQGLRNRNGQMFAEIDDL) adopt a coiled-coil conformation.

The protein belongs to the FtsB family. In terms of assembly, part of a complex composed of FtsB, FtsL and FtsQ.

It localises to the cell inner membrane. Its function is as follows. Essential cell division protein. May link together the upstream cell division proteins, which are predominantly cytoplasmic, with the downstream cell division proteins, which are predominantly periplasmic. In Aliivibrio salmonicida (strain LFI1238) (Vibrio salmonicida (strain LFI1238)), this protein is Cell division protein FtsB.